A 520-amino-acid polypeptide reads, in one-letter code: Probable DNA ligase (520 aa).

ATP is bound at residue Glu213. Lys215 serves as the catalytic N6-AMP-lysine intermediate. 6 residues coordinate ATP: Arg220, Arg235, Glu264, Phe300, Arg372, and Lys378.

The protein belongs to the ATP-dependent DNA ligase family. Mg(2+) serves as cofactor.

The catalysed reaction is ATP + (deoxyribonucleotide)n-3'-hydroxyl + 5'-phospho-(deoxyribonucleotide)m = (deoxyribonucleotide)n+m + AMP + diphosphate.. Functionally, DNA ligase that seals nicks in double-stranded DNA during DNA replication, DNA recombination and DNA repair. This is Probable DNA ligase from Mycobacterium sp. (strain JLS).